A 460-amino-acid polypeptide reads, in one-letter code: Ribulose bisphosphate carboxylase large chain (460 aa).

Lys4 carries the post-translational modification N6,N6,N6-trimethyllysine. Asn113 and Thr163 together coordinate substrate. Lys165 (proton acceptor) is an active-site residue. Lys167 provides a ligand contact to substrate. Mg(2+)-binding residues include Lys191, Asp193, and Glu194. At Lys191 the chain carries N6-carboxylysine. The Proton acceptor role is filled by His284. Substrate-binding residues include Arg285, His317, and Ser369.

This sequence belongs to the RuBisCO large chain family. Type I subfamily. Heterohexadecamer of 8 large chains and 8 small chains. Requires Mg(2+) as cofactor.

The protein localises to the plastid. It localises to the chloroplast. The enzyme catalyses 2 (2R)-3-phosphoglycerate + 2 H(+) = D-ribulose 1,5-bisphosphate + CO2 + H2O. It catalyses the reaction D-ribulose 1,5-bisphosphate + O2 = 2-phosphoglycolate + (2R)-3-phosphoglycerate + 2 H(+). RuBisCO catalyzes two reactions: the carboxylation of D-ribulose 1,5-bisphosphate, the primary event in carbon dioxide fixation, as well as the oxidative fragmentation of the pentose substrate in the photorespiration process. Both reactions occur simultaneously and in competition at the same active site. This Cunninghamia lanceolata (China fir) protein is Ribulose bisphosphate carboxylase large chain.